A 431-amino-acid polypeptide reads, in one-letter code: Chaperone SurA (431 aa).

The first 22 residues, 1-22 (MKLWKPTLISVLSALTLFNAHA), serve as a signal peptide directing secretion. PpiC domains are found at residues 173-271 (TVQY…KIDD) and 280-380 (VTEV…EVLD).

It is found in the periplasm. The enzyme catalyses [protein]-peptidylproline (omega=180) = [protein]-peptidylproline (omega=0). Functionally, chaperone involved in the correct folding and assembly of outer membrane proteins. Recognizes specific patterns of aromatic residues and the orientation of their side chains, which are found more frequently in integral outer membrane proteins. May act in both early periplasmic and late outer membrane-associated steps of protein maturation. The protein is Chaperone SurA of Vibrio cholerae serotype O1 (strain ATCC 39315 / El Tor Inaba N16961).